A 219-amino-acid chain; its full sequence is Elongation factor Ts (219 aa).

The involved in Mg(2+) ion dislocation from EF-Tu stretch occupies residues 82-85; it reads TDFV.

Belongs to the EF-Ts family.

Its subcellular location is the cytoplasm. Associates with the EF-Tu.GDP complex and induces the exchange of GDP to GTP. It remains bound to the aminoacyl-tRNA.EF-Tu.GTP complex up to the GTP hydrolysis stage on the ribosome. This Trichodesmium erythraeum (strain IMS101) protein is Elongation factor Ts.